A 187-amino-acid polypeptide reads, in one-letter code: V-type ATP synthase subunit E (187 aa).

The protein belongs to the V-ATPase E subunit family.

Produces ATP from ADP in the presence of a proton gradient across the membrane. This Geotalea uraniireducens (strain Rf4) (Geobacter uraniireducens) protein is V-type ATP synthase subunit E.